Here is a 371-residue protein sequence, read N- to C-terminus: Queuine tRNA-ribosyltransferase (371 aa).

Asp90 (proton acceptor) is an active-site residue. Residues 90–94, Asp144, Gln189, and Gly215 each bind substrate; that span reads DSGGF. Positions 246 to 252 are RNA binding; sequence GVGTPEN. The active-site Nucleophile is Asp265. The tract at residues 270–274 is RNA binding; important for wobble base 34 recognition; the sequence is TRNAR. Zn(2+) contacts are provided by Cys303, Cys305, Cys308, and His334.

Belongs to the queuine tRNA-ribosyltransferase family. Homodimer. Within each dimer, one monomer is responsible for RNA recognition and catalysis, while the other monomer binds to the replacement base PreQ1. Requires Zn(2+) as cofactor.

It carries out the reaction 7-aminomethyl-7-carbaguanine + guanosine(34) in tRNA = 7-aminomethyl-7-carbaguanosine(34) in tRNA + guanine. It participates in tRNA modification; tRNA-queuosine biosynthesis. Catalyzes the base-exchange of a guanine (G) residue with the queuine precursor 7-aminomethyl-7-deazaguanine (PreQ1) at position 34 (anticodon wobble position) in tRNAs with GU(N) anticodons (tRNA-Asp, -Asn, -His and -Tyr). Catalysis occurs through a double-displacement mechanism. The nucleophile active site attacks the C1' of nucleotide 34 to detach the guanine base from the RNA, forming a covalent enzyme-RNA intermediate. The proton acceptor active site deprotonates the incoming PreQ1, allowing a nucleophilic attack on the C1' of the ribose to form the product. After dissociation, two additional enzymatic reactions on the tRNA convert PreQ1 to queuine (Q), resulting in the hypermodified nucleoside queuosine (7-(((4,5-cis-dihydroxy-2-cyclopenten-1-yl)amino)methyl)-7-deazaguanosine). This chain is Queuine tRNA-ribosyltransferase, found in Helicobacter pylori (strain HPAG1).